Consider the following 357-residue polypeptide: F-box only protein 25 (357 aa).

An interaction with beta-actin region spans residues 1-83 (MPFLGQDWRS…DTAAHSFYRE (83 aa)). Residues 224–271 (GLTLSDLPLHMLNNILYRFSDGWDIVTLGQVTPTLYMLSEDRRLWKRL) form the F-box domain.

Part of a SCF (SKP1-cullin-F-box) protein ligase complex consisting of FBXO25, SKP1, CUL1 and RBX1. Interacts directly with SKP1 and CUL1. Interacts (via C-terminus) with actin (via N-terminus).

The protein resides in the nucleus. Its pathway is protein modification; protein ubiquitination. Its function is as follows. Substrate-recognition component of the SCF (SKP1-CUL1-F-box protein)-type E3 ubiquitin ligase complex. May play a role in accumulation of expanded polyglutamine (polyQ) protein huntingtin (HTT). In Rattus norvegicus (Rat), this protein is F-box only protein 25 (Fbxo25).